A 327-amino-acid chain; its full sequence is MTMESGAENQQSGDAAVTEAENQQMTVQAQPQIATLAQVSMPAAHATSSAPTVTLVQLPNGQTVQVHGVIQAAQPSVIQSPQVQTVQISTIAESEDSQESVDSVTDSQKRREILSRRPSYRKILNDLSSDAPGVPRIEEEKSEEETSAPAITTVTVPTPIYQTSSGQYIAITQGGAIQLANNGTDGVQGLQTLTMTNAAATQPGTTILQYAQTTDGQQILVPSNQVVVQAASGDVQTYQIRTAPTSTIAPGVVMASSPALPTQPAEEAARKREVRLMKNREAARECRRKKKEYVKCLENRVAVLENQNKTLIEELKALKDLYCHKSD.

Disordered regions lie at residues 1-26 and 94-113; these read MTMESGAENQQSGDAAVTEAENQQMT and SEDSQESVDSVTDSQKRREI. Residues 87 to 146 form the KID domain; sequence QISTIAESEDSQESVDSVTDSQKRREILSRRPSYRKILNDLSSDAPGVPRIEEEKSEEET. Serine 119 bears the Phosphoserine; by CaMK1, CaMK2, CaMK4, PKB/AKT1 or PKB/AKT2, RPS6KA3, RPS6KA4, RPS6KA5, SGK1 and TSSK4 mark. Residue lysine 122 forms a Glycyl lysine isopeptide (Lys-Gly) (interchain with G-Cter in SUMO2) linkage. The disordered stretch occupies residues 125-148; sequence NDLSSDAPGVPRIEEEKSEEETSA. Serine 128 bears the Phosphoserine mark. A Phosphoserine; by HIPK2 modification is found at serine 257. Residues 269–327 enclose the bZIP domain; the sequence is ARKREVRLMKNREAARECRRKKKEYVKCLENRVAVLENQNKTLIEELKALKDLYCHKSD. The tract at residues 270-295 is basic motif; sequence RKREVRLMKNREAARECRRKKKEYVK. Glycyl lysine isopeptide (Lys-Gly) (interchain with G-Cter in SUMO1) cross-links involve residues lysine 271 and lysine 290. The interval 297 to 318 is leucine-zipper; sequence LENRVAVLENQNKTLIEELKAL.

Belongs to the bZIP family. In terms of assembly, interacts with PPRC1. Binds DNA as a dimer. This dimer is stabilized by magnesium ions. Interacts, through the bZIP domain, with the coactivators CRTC1/TORC1, CRTC2/TORC2 and CRTC3/TORC3. When phosphorylated on Ser-119, binds CREBBP. Interacts with CREBL2; regulates CREB1 phosphorylation, stability and transcriptional activity. Interacts (phosphorylated form) with TOX3. Interacts with ARRB1. Binds to HIPK2. Interacts with SGK1. Interacts with TSSK4; this interaction facilitates phosphorylation on Ser-119. Forms a complex with KMT2A and CREBBP. Interacts with TOX4; CREB1 is required for full induction of TOX4-dependent activity and the interaction is increased by cAMP and inhibited by insulin. As to quaternary structure, (Microbial infection) Interacts with hepatitis B virus/HBV protein X. (Microbial infection) Interacts with HTLV-1 protein Tax. Stimulated by phosphorylation. Phosphorylation of both Ser-119 and Ser-128 in the SCN regulates the activity of CREB and participates in circadian rhythm generation. Phosphorylation of Ser-119 allows CREBBP binding. In liver, phosphorylation is induced by fasting or glucagon in a circadian fashion. CREBL2 positively regulates phosphorylation at Ser-119 thereby stimulating CREB1 transcriptional activity. Phosphorylated upon calcium influx by CaMK4 and CaMK2 on Ser-119. CaMK4 is much more potent than CaMK2 in activating CREB. Phosphorylated by CaMK2 on Ser-128. Phosphorylation of Ser-128 blocks CREB-mediated transcription even when Ser-119 is phosphorylated. Phosphorylated by CaMK1. Phosphorylation of Ser-257 by HIPK2 in response to genotoxic stress promotes CREB1 activity, facilitating the recruitment of the coactivator CBP. Phosphorylated at Ser-119 by RPS6KA3, RPS6KA4 and RPS6KA5 in response to mitogenic or stress stimuli. Phosphorylated by TSSK4 on Ser-119. In terms of processing, sumoylated with SUMO1. Sumoylation on Lys-290, but not on Lys-271, is required for nuclear localization of this protein. Sumoylation is enhanced under hypoxia, promoting nuclear localization and stabilization.

The protein resides in the nucleus. Phosphorylation-dependent transcription factor that stimulates transcription upon binding to the DNA cAMP response element (CRE), a sequence present in many viral and cellular promoters. Transcription activation is enhanced by the TORC coactivators which act independently of Ser-119 phosphorylation. Involved in different cellular processes including the synchronization of circadian rhythmicity and the differentiation of adipose cells. Regulates the expression of apoptotic and inflammatory response factors in cardiomyocytes in response to ERFE-mediated activation of AKT signaling. This chain is Cyclic AMP-responsive element-binding protein 1 (CREB1), found in Homo sapiens (Human).